A 207-amino-acid chain; its full sequence is Zinc finger protein 487 (207 aa).

Residues 1–43 (MLENYSLLLSVGYCITKPEVVCKLEHGQVLWILEEESPSQSHL) enclose the KRAB domain. A C2H2-type; atypical zinc finger spans residues 177-202 (KQCFEYNQCGKAFHEEAACSTHKRVC).

It belongs to the krueppel C2H2-type zinc-finger protein family.

Its subcellular location is the nucleus. Its function is as follows. May be involved in transcriptional regulation. This Homo sapiens (Human) protein is Zinc finger protein 487 (ZNF487).